A 103-amino-acid polypeptide reads, in one-letter code: Small ribosomal subunit protein uS10 (103 aa).

The protein belongs to the universal ribosomal protein uS10 family. Part of the 30S ribosomal subunit.

Its function is as follows. Involved in the binding of tRNA to the ribosomes. The polypeptide is Small ribosomal subunit protein uS10 (Alcanivorax borkumensis (strain ATCC 700651 / DSM 11573 / NCIMB 13689 / SK2)).